Here is a 278-residue protein sequence, read N- to C-terminus: MAAASSRSFSLCVLLLLLLLAPPISASFLFDGGKSKSAAAAAAVDMEWRPATATWYGDAEGDGSTGGACGYGSLVDVVPMKARVGSVSPVLFKDGEGCGACYKVKCLDHGICSRRAVTVIVTDECPGGLCAFGRTHFDLSGAAFSRMAVAGAGGHLRDRGQLSVVYRRTACKYGGKNIAFRVNEGSTNFWLSLLVEFEDGQGDIGSMQIKQANSVEWLDMKHVWGATWCLVRGPLVGPFSVRLTTLSAQKALTARDVIPRNWKPTATYTSRLNFEAAL.

The first 26 residues, 1-26 (MAAASSRSFSLCVLLLLLLLAPPISA), serve as a signal peptide directing secretion. The Expansin-like EG45 domain maps to 66–176 (GGACGYGSLV…RRTACKYGGK (111 aa)). 3 disulfide bridges follow: Cys-69-Cys-98, Cys-101-Cys-171, and Cys-106-Cys-112. The Expansin-like CBD domain occupies 189-270 (FWLSLLVEFE…NWKPTATYTS (82 aa)).

Belongs to the expansin family. Expansin B subfamily.

The protein resides in the secreted. The protein localises to the cell wall. It localises to the membrane. In terms of biological role, may cause loosening and extension of plant cell walls by disrupting non-covalent bonding between cellulose microfibrils and matrix glucans. No enzymatic activity has been found. May be required for rapid internodal elongation in deepwater rice during submergence. In Oryza sativa subsp. japonica (Rice), this protein is Expansin-B17 (EXPB17).